The following is a 447-amino-acid chain: MSTVTTPSAPKVGFVSLGCPKALVDSERILTQLRMEGYEVVATYEDADVVVVNTCGFIDTAKAESLEVIGEAIKENGKVIVTGCMGVDANVIRDVHPSVLSVTGPQQYEQVVNAVHDVVPPRKDHNPLIDLVPPQGVKLTPRHYAYLKISEGCNHSCSFCIIPSMRGKLVSRPVGDVLDEAKRLVKSGVKELLVISQDTSAYGVDVKYRTGFWDGQPVKTRMTELCQALGSMGVWVRLHYVYPYPHVDELIPLMAAGKILPYLDIPFQHASPKILKLMKRPAFEDKTLARIKNWREQCPDLIIRSTFIVGFPGETEEDFQYLLDWLTEAQLDRVGCFQYSPVEGAPANLLDAAIVPDDVKQDRWDRFMAHQQAISAARLQMKIGKEIEVLIDEVDDRGAVGRCFFDAPEIDGNVFIGLEEGSTVQPGDKIMCRVTDADEYDLWAEML.

In terms of domain architecture, MTTase N-terminal spans proline 10–proline 120. [4Fe-4S] cluster is bound by residues cysteine 19, cysteine 55, cysteine 84, cysteine 153, cysteine 157, and cysteine 160. The region spanning leucine 139–alanine 377 is the Radical SAM core domain. In terms of domain architecture, TRAM spans glutamine 380 to leucine 447.

This sequence belongs to the methylthiotransferase family. RimO subfamily. [4Fe-4S] cluster serves as cofactor.

Its subcellular location is the cytoplasm. The enzyme catalyses L-aspartate(89)-[ribosomal protein uS12]-hydrogen + (sulfur carrier)-SH + AH2 + 2 S-adenosyl-L-methionine = 3-methylsulfanyl-L-aspartate(89)-[ribosomal protein uS12]-hydrogen + (sulfur carrier)-H + 5'-deoxyadenosine + L-methionine + A + S-adenosyl-L-homocysteine + 2 H(+). Functionally, catalyzes the methylthiolation of an aspartic acid residue of ribosomal protein uS12. This is Ribosomal protein uS12 methylthiotransferase RimO from Pseudomonas savastanoi pv. phaseolicola (strain 1448A / Race 6) (Pseudomonas syringae pv. phaseolicola (strain 1448A / Race 6)).